The sequence spans 896 residues: Translation initiation factor IF-2 (896 aa).

A disordered region spans residues 1-260; sequence MDIENTNKPD…AQTNKKAHKA (260 aa). The segment covering 19-34 has biased composition (basic and acidic residues); sequence KAADSKPESGKTDSKR. Over residues 56-66 the composition is skewed to low complexity; that stretch reads EESSGGKASGK. Basic and acidic residues predominate over residues 85–136; that stretch reads SVKEKKPDERLEETKKTAPRFEDKKSDAPSAQNEKRSFDSAKKEEKQTERKK. A compositionally biased stretch (low complexity) spans 168 to 177; the sequence is RGQGNRPQRP. The region spanning 375-544 is the tr-type G domain; that stretch reads PRPPVVTIMG…LLQAEVLELK (170 aa). A G1 region spans residues 384-391; it reads GHVDHGKT. Residue 384 to 391 participates in GTP binding; it reads GHVDHGKT. Positions 409–413 are G2; sequence GITQH. The segment at 430–433 is G3; that stretch reads DTPG. Residues 430-434 and 484-487 contribute to the GTP site; these read DTPGH and NKVD. The tract at residues 484 to 487 is G4; that stretch reads NKVD. The segment at 520–522 is G5; it reads SAL. Residues 877–896 are disordered; sequence SDSEKYKAPEIKEEGTETDE.

It belongs to the TRAFAC class translation factor GTPase superfamily. Classic translation factor GTPase family. IF-2 subfamily.

The protein localises to the cytoplasm. In terms of biological role, one of the essential components for the initiation of protein synthesis. Protects formylmethionyl-tRNA from spontaneous hydrolysis and promotes its binding to the 30S ribosomal subunits. Also involved in the hydrolysis of GTP during the formation of the 70S ribosomal complex. The sequence is that of Translation initiation factor IF-2 from Treponema denticola (strain ATCC 35405 / DSM 14222 / CIP 103919 / JCM 8153 / KCTC 15104).